A 276-amino-acid chain; its full sequence is Glutamate 5-kinase (276 aa).

Residue K14 coordinates ATP. Substrate is bound by residues S54, D141, and N157. ATP contacts are provided by residues 177 to 178 (SD) and 219 to 225 (TGGMLTK).

The protein belongs to the glutamate 5-kinase family.

The protein resides in the cytoplasm. The enzyme catalyses L-glutamate + ATP = L-glutamyl 5-phosphate + ADP. It functions in the pathway amino-acid biosynthesis; L-proline biosynthesis; L-glutamate 5-semialdehyde from L-glutamate: step 1/2. Functionally, catalyzes the transfer of a phosphate group to glutamate to form L-glutamate 5-phosphate. The protein is Glutamate 5-kinase of Listeria monocytogenes serotype 4a (strain HCC23).